The following is a 301-amino-acid chain: GLABROUS1 enhancer-binding protein-like 2 (301 aa).

Positions 1-62 are disordered; that stretch reads MATPTELGFS…NTKMASPPSN (62 aa). Positions 44-54 are enriched in basic residues; it reads KKKKKKTKHNT. Residues 268 to 289 form a non-canonical leucine-zipper region; that stretch reads LSNEWKALCVEELKLNINKLRF.

The protein belongs to the GeBP family. As to quaternary structure, homo- and heterodimers. Interacts with GEBP, GPL1 and GPL3. As to expression, expressed in the apical meristem and young leaf primordia. Detected in the vascular tissues of cotyledons and leaves, in hydathodes and in the septun of siliques, but not in roots.

Its subcellular location is the nucleus. In terms of biological role, probable transcription factor. May play redundant roles with GEBP and GPL1 in cytokinin responses by regulating the transcript levels of type-A ARR response genes. Involved in stress responses. Plays a repressive role in cell expansion by counteracting the positive role of CPR5 in this process, but does not regulate cell proliferation or endoreduplication. The sequence is that of GLABROUS1 enhancer-binding protein-like 2 from Arabidopsis thaliana (Mouse-ear cress).